Here is a 450-residue protein sequence, read N- to C-terminus: Phospho-2-dehydro-3-deoxyheptonate aldolase (450 aa).

Positions 1–13 (MTVNAKTSPSAGN) are enriched in polar residues. The interval 1-20 (MTVNAKTSPSAGNTWRDLPA) is disordered.

Belongs to the class-II DAHP synthase family. In terms of assembly, homodimer.

It catalyses the reaction D-erythrose 4-phosphate + phosphoenolpyruvate + H2O = 7-phospho-2-dehydro-3-deoxy-D-arabino-heptonate + phosphate. It functions in the pathway metabolic intermediate biosynthesis; chorismate biosynthesis; chorismate from D-erythrose 4-phosphate and phosphoenolpyruvate: step 1/7. This Streptomyces coelicolor (strain ATCC BAA-471 / A3(2) / M145) protein is Phospho-2-dehydro-3-deoxyheptonate aldolase (aroH).